The chain runs to 415 residues: S-inosyl-L-homocysteine hydrolase (415 aa).

Substrate contacts are provided by Asp-123 and Glu-148. 149 to 151 is a binding site for NAD(+); it reads TTT. Lys-178 and Asp-182 together coordinate substrate. NAD(+) contacts are provided by residues Asn-183, 212 to 217, Glu-235, 291 to 293, and Asn-337; these read GYGWCG and AGH.

The protein belongs to the adenosylhomocysteinase family. In terms of assembly, exists both as a homotetramer and a homodimer, in a 4:1 ratio. The cofactor is NAD(+).

Its subcellular location is the cytoplasm. The enzyme catalyses S-inosyl-L-homocysteine + H2O = L-homocysteine + inosine. Its pathway is amino-acid biosynthesis; S-adenosyl-L-methionine biosynthesis. In terms of biological role, catalyzes the hydrolysis of S-inosyl-L-homocysteine (SIH) to L-homocysteine (Hcy) and inosine. Likely functions in a S-adenosyl-L-methionine (SAM) recycling pathway from S-adenosyl-L-homocysteine (SAH) produced from SAM-dependent methylation reactions. Can also catalyze the reverse reaction in vitro, i.e. the synthesis of SIH from Hcy and inosine. Is specific for SIH and inosine as it is unable to either hydrolyze SAH or synthesize SAH from adenosine and Hcy. The chain is S-inosyl-L-homocysteine hydrolase from Methanocaldococcus jannaschii (strain ATCC 43067 / DSM 2661 / JAL-1 / JCM 10045 / NBRC 100440) (Methanococcus jannaschii).